A 268-amino-acid chain; its full sequence is Interleukin-2 receptor subunit alpha (268 aa).

The first 21 residues, 1 to 21 (MEPRLLMLGFLSLTIVPSCRA), serve as a signal peptide directing secretion. Residues 22-79 (ELCLYDPPEVPNATFKALSYKNGTILNCECKRGFRRLKELVYMRCLGNSWSSNCQCTS) form the Sushi 1 domain. Residues 22-236 (ELCLYDPPEV…ETFVLTMEYK (215 aa)) lie on the Extracellular side of the membrane. Intrachain disulfides connect C24–C66, C49–C75, and C51–C77. N-linked (GlcNAc...) asparagine glycans are attached at residues N33 and N43. Residues 86–109 (RKQVTAQLEHQKEQQTTTDMQKPT) form a disordered region. A compositionally biased stretch (polar residues) spans 88 to 109 (QVTAQLEHQKEQQTTTDMQKPT). N116 carries N-linked (GlcNAc...) asparagine glycosylation. The Sushi 2 domain maps to 119–182 (GHCREPPPWK…WTQPQLTCVD (64 aa)). Disulfide bonds link C121/C164 and C148/C180. The interval 189–219 (FLASEESQGSRNSSPESETSCPITTTDFPQP) is disordered. The segment covering 193 to 211 (EESQGSRNSSPESETSCPI) has biased composition (polar residues). Residues 237–257 (VAVASCLFLLISILLLSGLTW) traverse the membrane as a helical segment. Over 258–268 (QHRWRKSRRTI) the chain is Cytoplasmic.

As to quaternary structure, non-covalent dimer of an alpha and a beta subunit. IL2R exists in 3 different forms: a high affinity dimer, an intermediate affinity monomer (beta subunit), and a low affinity monomer (alpha subunit). The high and intermediate affinity forms also associate with a gamma subunit.

The protein localises to the membrane. Functionally, receptor for interleukin-2. The receptor is involved in the regulation of immune tolerance by controlling regulatory T cells (TREGs) activity. TREGs suppress the activation and expansion of autoreactive T-cells. The protein is Interleukin-2 receptor subunit alpha (Il2ra) of Mus musculus (Mouse).